Here is a 530-residue protein sequence, read N- to C-terminus: Bifunctional purine biosynthesis protein PurH (530 aa).

The MGS-like domain occupies 1–148 (MNNARPIRRA…KNHKDVTIVV (148 aa)).

The protein belongs to the PurH family.

It carries out the reaction (6R)-10-formyltetrahydrofolate + 5-amino-1-(5-phospho-beta-D-ribosyl)imidazole-4-carboxamide = 5-formamido-1-(5-phospho-D-ribosyl)imidazole-4-carboxamide + (6S)-5,6,7,8-tetrahydrofolate. The catalysed reaction is IMP + H2O = 5-formamido-1-(5-phospho-D-ribosyl)imidazole-4-carboxamide. Its pathway is purine metabolism; IMP biosynthesis via de novo pathway; 5-formamido-1-(5-phospho-D-ribosyl)imidazole-4-carboxamide from 5-amino-1-(5-phospho-D-ribosyl)imidazole-4-carboxamide (10-formyl THF route): step 1/1. The protein operates within purine metabolism; IMP biosynthesis via de novo pathway; IMP from 5-formamido-1-(5-phospho-D-ribosyl)imidazole-4-carboxamide: step 1/1. The chain is Bifunctional purine biosynthesis protein PurH from Vibrio atlanticus (strain LGP32) (Vibrio splendidus (strain Mel32)).